Reading from the N-terminus, the 188-residue chain is Putative 3-methyladenine DNA glycosylase (188 aa).

Belongs to the DNA glycosylase MPG family.

This is Putative 3-methyladenine DNA glycosylase from Ehrlichia ruminantium (strain Welgevonden).